The chain runs to 102 residues: Small ribosomal subunit protein uS17 (102 aa).

Polar residues predominate over residues 1–15 (MTDETASQEASQSTD). Residues 1–20 (MTDETASQEASQSTDAAAPA) are disordered.

This sequence belongs to the universal ribosomal protein uS17 family. As to quaternary structure, part of the 30S ribosomal subunit.

Its function is as follows. One of the primary rRNA binding proteins, it binds specifically to the 5'-end of 16S ribosomal RNA. This chain is Small ribosomal subunit protein uS17, found in Frankia casuarinae (strain DSM 45818 / CECT 9043 / HFP020203 / CcI3).